A 651-amino-acid chain; its full sequence is Probable potassium transport system protein Kup 3 (651 aa).

12 consecutive transmembrane segments (helical) span residues phenylalanine 38–leucine 58, valine 77–lysine 97, leucine 129–threonine 149, proline 166–valine 186, phenylalanine 197–isoleucine 217, isoleucine 242–alanine 262, tryptophan 276–leucine 296, leucine 314–isoleucine 334, isoleucine 366–phenylalanine 386, tyrosine 396–tryptophan 416, tryptophan 421–phenylalanine 441, and leucine 448–threonine 468.

The protein belongs to the HAK/KUP transporter (TC 2.A.72) family.

It localises to the cell inner membrane. The enzyme catalyses K(+)(in) + H(+)(in) = K(+)(out) + H(+)(out). Transport of potassium into the cell. Likely operates as a K(+):H(+) symporter. This chain is Probable potassium transport system protein Kup 3, found in Rhodopseudomonas palustris (strain ATCC BAA-98 / CGA009).